Here is a 462-residue protein sequence, read N- to C-terminus: Argininosuccinate lyase (462 aa).

This sequence belongs to the lyase 1 family. Argininosuccinate lyase subfamily.

The protein resides in the cytoplasm. The enzyme catalyses 2-(N(omega)-L-arginino)succinate = fumarate + L-arginine. Its pathway is amino-acid biosynthesis; L-arginine biosynthesis; L-arginine from L-ornithine and carbamoyl phosphate: step 3/3. The chain is Argininosuccinate lyase from Bacillus cereus (strain B4264).